We begin with the raw amino-acid sequence, 178 residues long: ATP synthase subunit delta (178 aa).

The protein belongs to the ATPase delta chain family. As to quaternary structure, F-type ATPases have 2 components, F(1) - the catalytic core - and F(0) - the membrane proton channel. F(1) has five subunits: alpha(3), beta(3), gamma(1), delta(1), epsilon(1). F(0) has three main subunits: a(1), b(2) and c(10-14). The alpha and beta chains form an alternating ring which encloses part of the gamma chain. F(1) is attached to F(0) by a central stalk formed by the gamma and epsilon chains, while a peripheral stalk is formed by the delta and b chains.

The protein resides in the cell inner membrane. Functionally, f(1)F(0) ATP synthase produces ATP from ADP in the presence of a proton or sodium gradient. F-type ATPases consist of two structural domains, F(1) containing the extramembraneous catalytic core and F(0) containing the membrane proton channel, linked together by a central stalk and a peripheral stalk. During catalysis, ATP synthesis in the catalytic domain of F(1) is coupled via a rotary mechanism of the central stalk subunits to proton translocation. This protein is part of the stalk that links CF(0) to CF(1). It either transmits conformational changes from CF(0) to CF(1) or is implicated in proton conduction. In Laribacter hongkongensis (strain HLHK9), this protein is ATP synthase subunit delta.